The following is a 63-amino-acid chain: Large ribosomal subunit protein bL28 (63 aa).

The protein belongs to the bacterial ribosomal protein bL28 family.

The sequence is that of Large ribosomal subunit protein bL28 from Geobacter metallireducens (strain ATCC 53774 / DSM 7210 / GS-15).